Here is an 85-residue protein sequence, read N- to C-terminus: Small ribosomal subunit protein bS20 (85 aa).

This sequence belongs to the bacterial ribosomal protein bS20 family.

Binds directly to 16S ribosomal RNA. This is Small ribosomal subunit protein bS20 from Borrelia hermsii (strain HS1 / DAH).